The primary structure comprises 616 residues: Dihydroxy-acid dehydratase (616 aa).

Asp81 serves as a coordination point for Mg(2+). Cys122 lines the [2Fe-2S] cluster pocket. Residues Asp123 and Lys124 each contribute to the Mg(2+) site. Lys124 is modified (N6-carboxylysine). Residue Cys195 participates in [2Fe-2S] cluster binding. Residue Glu491 participates in Mg(2+) binding. Catalysis depends on Ser517, which acts as the Proton acceptor.

The protein belongs to the IlvD/Edd family. As to quaternary structure, homodimer. [2Fe-2S] cluster is required as a cofactor. Mg(2+) serves as cofactor.

The enzyme catalyses (2R)-2,3-dihydroxy-3-methylbutanoate = 3-methyl-2-oxobutanoate + H2O. It catalyses the reaction (2R,3R)-2,3-dihydroxy-3-methylpentanoate = (S)-3-methyl-2-oxopentanoate + H2O. It functions in the pathway amino-acid biosynthesis; L-isoleucine biosynthesis; L-isoleucine from 2-oxobutanoate: step 3/4. It participates in amino-acid biosynthesis; L-valine biosynthesis; L-valine from pyruvate: step 3/4. Functionally, functions in the biosynthesis of branched-chain amino acids. Catalyzes the dehydration of (2R,3R)-2,3-dihydroxy-3-methylpentanoate (2,3-dihydroxy-3-methylvalerate) into 2-oxo-3-methylpentanoate (2-oxo-3-methylvalerate) and of (2R)-2,3-dihydroxy-3-methylbutanoate (2,3-dihydroxyisovalerate) into 2-oxo-3-methylbutanoate (2-oxoisovalerate), the penultimate precursor to L-isoleucine and L-valine, respectively. In Methylobacillus flagellatus (strain ATCC 51484 / DSM 6875 / VKM B-1610 / KT), this protein is Dihydroxy-acid dehydratase.